The primary structure comprises 261 residues: (S)-ureidoglycine aminohydrolase (261 aa).

One can recognise a Cupin type-2 domain in the interval 184 to 230 (LSFAPGASHGYIETHVQEHGAYILSGQGVYNLDNNWIPVKKGDYIFM). Residues glutamate 196, histidine 198, histidine 202, and glutamine 236 each contribute to the Mn(2+) site. Glutamate 196 is a binding site for substrate. Substrate is bound by residues glutamine 236, tyrosine 249, and lysine 253.

Belongs to the UGHY family. As to quaternary structure, monomer. Mn(2+) serves as cofactor.

The protein localises to the cytoplasm. It carries out the reaction (S)-2-ureidoglycine + H2O = (S)-ureidoglycolate + NH4(+). In terms of biological role, involved in the anaerobic nitrogen utilization via the assimilation of allantoin. Catalyzes the second stereospecific hydrolysis reaction (deamination) of the allantoin degradation pathway, producing S-ureidoglycolate and ammonia from S-ureidoglycine. The protein is (S)-ureidoglycine aminohydrolase (allE) of Escherichia coli (strain K12).